A 616-amino-acid polypeptide reads, in one-letter code: MIQILLVIICLAVFPYQGCSIILGSGNVNDYEVVYPQKVTALPKGAVQQPEQKYEDAMQYEFEVKGEPVVLHLEKNKELFSEDYSETHYSSDDREITTNPSVEDHCYYHGRIQNDAESTASISACNGLKGHFKLRGETYFIEPLKIPDSEAHAVYKYENIENEDEAPKMCGVTQDNWESDEPIKKTLGLIVPPHERKFEKKFIELVVVVDHSMVTKYNNDSTAIRTWIYEMLNTVNEIYLPFNIRVALVGLEFWCNGDLINVTSTADDTLHSFGEWRASDLLNRKRHDHAQLLTNVTLDHSTLGITFVYGMCKSDRSVELILDYSNITFNMAYIIAHEMGHSLGMLHDTKFCTCGAKPCIMFGKESIPPPKEFSSCSYDQYNKYLLKYNPKCILDPPLRKDIASPAVCGNEIWEEGEECDCGSPADCRNPCCDAATCKLKPGAECGNGECCDKCKIRKAGTECRPARDDCDVAEHCTGQSAECPRNEFQRNGQPCLNNSGYCYNGDCPIMLNQCIALFSPSATVAQDSCFQRNLQGSYYGYCTKEIGYYGKRFPCAPQDVKCGRLYCLDNSFKKNMRCKNDYSYADENKGIVEPGTKCEDGKVCINRKCVDVNTAY.

Residues 1-20 form the signal peptide; that stretch reads MIQILLVIICLAVFPYQGCS. The propeptide occupies 21–190; that stretch reads IILGSGNVND…EPIKKTLGLI (170 aa). In terms of domain architecture, Peptidase M12B spans 201–397; that stretch reads KFIELVVVVD…YNPKCILDPP (197 aa). Ca(2+) is bound at residue glutamate 204. Residues asparagine 219 and asparagine 261 are each glycosylated (N-linked (GlcNAc...) asparagine). Ca(2+) is bound at residue aspartate 288. 2 N-linked (GlcNAc...) asparagine glycosylation sites follow: asparagine 295 and asparagine 326. 3 disulfide bridges follow: cysteine 312–cysteine 392, cysteine 352–cysteine 376, and cysteine 354–cysteine 359. Histidine 337 lines the Zn(2+) pocket. Glutamate 338 is an active-site residue. The Zn(2+) site is built by histidine 341 and histidine 347. Ca(2+) contacts are provided by cysteine 392, valine 407, asparagine 410, isoleucine 412, glutamate 414, glutamate 417, and aspartate 420. Positions 405 to 491 constitute a Disintegrin domain; that stretch reads PAVCGNEIWE…ECPRNEFQRN (87 aa). Intrachain disulfides connect cysteine 408–cysteine 437, cysteine 419–cysteine 432, cysteine 421–cysteine 427, cysteine 431–cysteine 454, cysteine 445–cysteine 451, cysteine 450–cysteine 476, cysteine 463–cysteine 483, cysteine 470–cysteine 502, cysteine 495–cysteine 507, cysteine 514–cysteine 567, cysteine 529–cysteine 578, cysteine 542–cysteine 555, cysteine 562–cysteine 604, and cysteine 598–cysteine 609. The short motif at 469 to 471 is the D/ECD-tripeptide element; the sequence is DCD. Residues aspartate 471, valine 472, and asparagine 486 each coordinate Ca(2+). A glycan (N-linked (GlcNAc...) asparagine) is linked at asparagine 497.

The protein belongs to the venom metalloproteinase (M12B) family. P-III subfamily. P-IIIa sub-subfamily. As to quaternary structure, monomer. Zn(2+) serves as cofactor. Expressed by the venom gland.

It localises to the secreted. Snake venom zinc metalloproteinase that catalyzes the conversion of prothrombin (F2) to alpha-thrombin through formation of a thrombin intermediate, thereby functioning as a procoagulant protein. Has a low Km for prothrombin and a high kcat. Cleaves the 320-Arg-Ile-321 bond in prothrombin and produces meizothrombin which is ultimately converted to alpha-thrombin by autolysis. The sequence is that of Zinc metalloproteinase-disintegrin-like ecarin from Echis carinatus (Saw-scaled viper).